The following is a 321-amino-acid chain: Aspartate carbamoyltransferase catalytic subunit (321 aa).

2 residues coordinate carbamoyl phosphate: R65 and T66. K93 contributes to the L-aspartate binding site. R115, H143, and Q146 together coordinate carbamoyl phosphate. L-aspartate contacts are provided by R176 and R230. The carbamoyl phosphate site is built by G271 and P272.

This sequence belongs to the aspartate/ornithine carbamoyltransferase superfamily. ATCase family. In terms of assembly, heterododecamer (2C3:3R2) of six catalytic PyrB chains organized as two trimers (C3), and six regulatory PyrI chains organized as three dimers (R2).

It carries out the reaction carbamoyl phosphate + L-aspartate = N-carbamoyl-L-aspartate + phosphate + H(+). It functions in the pathway pyrimidine metabolism; UMP biosynthesis via de novo pathway; (S)-dihydroorotate from bicarbonate: step 2/3. Its function is as follows. Catalyzes the condensation of carbamoyl phosphate and aspartate to form carbamoyl aspartate and inorganic phosphate, the committed step in the de novo pyrimidine nucleotide biosynthesis pathway. This is Aspartate carbamoyltransferase catalytic subunit from Bartonella tribocorum (strain CIP 105476 / IBS 506).